We begin with the raw amino-acid sequence, 267 residues long: 3-oxoadipate enol-lactonase 2 (267 aa).

It carries out the reaction (4,5-dihydro-5-oxofuran-2-yl)-acetate + H2O = 3-oxoadipate + H(+). It participates in aromatic compound metabolism; beta-ketoadipate pathway; 3-oxoadipate from 5-oxo-4,5-dihydro-2-furylacetate: step 1/1. This Acinetobacter baylyi (strain ATCC 33305 / BD413 / ADP1) protein is 3-oxoadipate enol-lactonase 2 (catD).